A 274-amino-acid chain; its full sequence is Large ribosomal subunit protein uL2 (274 aa).

A disordered region spans residues 221-256 (RGTAMNPVDHPHGGGEGRNFGKHPVTPWGVPTKGYK).

The protein belongs to the universal ribosomal protein uL2 family. In terms of assembly, part of the 50S ribosomal subunit. Forms a bridge to the 30S subunit in the 70S ribosome.

Its function is as follows. One of the primary rRNA binding proteins. Required for association of the 30S and 50S subunits to form the 70S ribosome, for tRNA binding and peptide bond formation. It has been suggested to have peptidyltransferase activity; this is somewhat controversial. Makes several contacts with the 16S rRNA in the 70S ribosome. This is Large ribosomal subunit protein uL2 from Thioalkalivibrio sulfidiphilus (strain HL-EbGR7).